The primary structure comprises 303 residues: Holdfast attachment protein D (303 aa).

Positions 266–281 (SARSTMSGPKSCSTTF) are enriched in polar residues. Positions 266 to 303 (SARSTMSGPKSCSTTFRPIRAAASRRPPASAGTRAMTR) are disordered. Residues 282 to 303 (RPIRAAASRRPPASAGTRAMTR) show a composition bias toward low complexity.

Its subcellular location is the cell outer membrane. Involved in attachment of the holdfast to the cell. The holdfast is a structure that allows the bacteria to firmly adhere to surfaces. The polypeptide is Holdfast attachment protein D (hfaD) (Caulobacter vibrioides (strain ATCC 19089 / CIP 103742 / CB 15) (Caulobacter crescentus)).